We begin with the raw amino-acid sequence, 341 residues long: Arfaptin-2 (341 aa).

The segment at 46–85 (NETSIVSGGYGGSGDGLIPTGSGRHPSHSTTPSGPGDEVA) is disordered. Serine 72 carries the post-translational modification Phosphoserine. Threonine 76 is modified (phosphothreonine). The region spanning 121-321 (TVDLELELQI…NQKQLEQTLQ (201 aa)) is the AH domain.

Forms homodimers or heterodimers with ARFIP1. Interacts with RAC1. Specifically binds to GTP-bound ARF1 and ARF6, but binds to RAC1.GTP and RAC1.GDP with similar affinities. Interacts with ARL1. Interacts (via N-terminus) with IKBKB and IKBKG; these interactions inhibit activation of NF-kappa-B.

It localises to the golgi apparatus. Its subcellular location is the trans-Golgi network membrane. Plays a role in constitutive metalloproteinase (MMP) secretion from the trans Golgi network. May have important functions during vesicle biogenesis at certain cargo subdomains, which could be predominantly utilized by secreted MMPs, such as MMP7 and MMP2. Also involved in autophagy by regulating the starvation-dependent trafficking of ATG9A vesicles which deliver the phosphatidylinositol 4-kinase beta (PI4KB) to the autophagosome initiation site. Involved in phagophore growth during mitophagy by regulating ATG9A trafficking to mitochondria. In addition, plays a role in NF-kappa-B inhibition by interacting with IKBKB and IKBKG. In Homo sapiens (Human), this protein is Arfaptin-2.